Consider the following 294-residue polypeptide: NADH-cytochrome b5 reductase 1 (294 aa).

The helical transmembrane segment at 18-38 (PFIVFATVATIISAFIGYYFL) threads the bilayer. The FAD-binding FR-type domain occupies 51-154 (DEFQKFPLIE…RGPKGFFTYT (104 aa)). Residues 134 to 149 (AGKN…GPKG) and 160 to 192 (SFGM…KIHL) contribute to the FAD site.

It belongs to the flavoprotein pyridine nucleotide cytochrome reductase family. Monomer. Component of the 2-(3-amino-3-carboxypropyl)histidine synthase complex composed of DPH1, DPH2, DPH3 and a NADH-dependent reductase, predominantly CBR1. FAD serves as cofactor.

The protein resides in the mitochondrion outer membrane. The enzyme catalyses 2 Fe(III)-[cytochrome b5] + NADH = 2 Fe(II)-[cytochrome b5] + NAD(+) + H(+). It catalyses the reaction 2 Fe(3+)-[Dph3] + NADH = 2 Fe(2+)-[Dph3] + NAD(+) + H(+). It participates in protein modification; peptidyl-diphthamide biosynthesis. NADH-dependent reductase for DPH3 and cytochrome b5. Required for the first step of diphthamide biosynthesis, a post-translational modification of histidine which occurs in elongation factor 2. DPH1 and DPH2 transfer a 3-amino-3-carboxypropyl (ACP) group from S-adenosyl-L-methionine (SAM) to a histidine residue, the reaction is assisted by a reduction system comprising DPH3 and a NADH-dependent reductase, predominantly CBR1. By reducing DPH3, also involved in the formation of the tRNA wobble base modification mcm5s 2U (5-methoxycarbonylmethyl-2-thiouridine), mediated by the elongator complex. The cytochrome b5/NADH cytochrome b5 reductase electron transfer system supports the catalytic activity of several sterol biosynthetic enzymes. In Candida albicans (strain SC5314 / ATCC MYA-2876) (Yeast), this protein is NADH-cytochrome b5 reductase 1 (CBR1).